We begin with the raw amino-acid sequence, 212 residues long: F-box protein GID2 (212 aa).

The interval 1 to 74 (MKFRSDSSGG…AGEGEQPRVP (74 aa)) is disordered. A compositionally biased stretch (low complexity) spans 35–59 (DPSSSSSQGEASSSSQPPPQQQQEE). An F-box domain is found at 70 to 116 (QPRVPDLGEDLVFEVLRRAEARTLAAAACVSRGWRQLAEDERLWEAA).

As to quaternary structure, part of some SCF(GID2) complex, which consist of a SKP1 protein, CUL1, GID2 and some RING box protein. Interacts directly with SKP2 and SKP15. Interacts directly with DELLA protein SLR1. May have a higher affinity for phosphorylated SLR1 proteins. In terms of tissue distribution, widely expressed. Preferentially expressed in unopened flowers, shoot apices and elongation stem. Expressed at lower level in the leaf blades, leaf sheaths, roots and rachis.

It is found in the nucleus. The protein operates within protein modification; protein ubiquitination. Its function is as follows. Essential component of some SCF-type E3 ligase complex that positively regulates the gibberellin signaling pathway. Upon gibberellin treatment, the complex mediates the ubiquitination and subsequent degradation of DELLA protein SLR1, a repressor of the gibberellin pathway, leading to activate the pathway. This Oryza sativa subsp. japonica (Rice) protein is F-box protein GID2 (GID2).